A 403-amino-acid chain; its full sequence is Acetate kinase (403 aa).

N7 is a Mg(2+) binding site. Residue K14 participates in ATP binding. Residue R97 participates in substrate binding. The Proton donor/acceptor role is filled by D154. Residues 213–217 (HLGNG), 287–289 (DMR), and 335–339 (GIGEN) contribute to the ATP site. Mg(2+) is bound at residue E388.

It belongs to the acetokinase family. As to quaternary structure, homodimer. The cofactor is Mg(2+). Mn(2+) serves as cofactor.

Its subcellular location is the cytoplasm. It carries out the reaction acetate + ATP = acetyl phosphate + ADP. It functions in the pathway metabolic intermediate biosynthesis; acetyl-CoA biosynthesis; acetyl-CoA from acetate: step 1/2. Functionally, catalyzes the formation of acetyl phosphate from acetate and ATP. Can also catalyze the reverse reaction. The polypeptide is Acetate kinase (Synechococcus sp. (strain JA-2-3B'a(2-13)) (Cyanobacteria bacterium Yellowstone B-Prime)).